The chain runs to 505 residues: Lysine--tRNA ligase (505 aa).

Mg(2+) is bound by residues Glu-415 and Glu-422.

The protein belongs to the class-II aminoacyl-tRNA synthetase family. In terms of assembly, homodimer. The cofactor is Mg(2+).

The protein localises to the cytoplasm. It carries out the reaction tRNA(Lys) + L-lysine + ATP = L-lysyl-tRNA(Lys) + AMP + diphosphate. In Salmonella arizonae (strain ATCC BAA-731 / CDC346-86 / RSK2980), this protein is Lysine--tRNA ligase.